The sequence spans 322 residues: ATP-dependent 6-phosphofructokinase (322 aa).

G12 provides a ligand contact to ATP. 22 to 26 contributes to the ADP binding site; it reads RATAK. ATP contacts are provided by residues 73 to 74 and 103 to 106; these read RS and GDGS. D104 provides a ligand contact to Mg(2+). 127–129 lines the substrate pocket; sequence TID. The active-site Proton acceptor is the D129. R156 contacts ADP. Substrate-binding positions include R164 and 171–173; that span reads MGR. ADP contacts are provided by residues 187-189 and 215-217; these read GGD and KLH. Residues E224, R245, and 251–254 contribute to the substrate site; that span reads HIQR.

The protein belongs to the phosphofructokinase type A (PFKA) family. ATP-dependent PFK group I subfamily. Prokaryotic clade 'B1' sub-subfamily. In terms of assembly, homotetramer. Requires Mg(2+) as cofactor.

It is found in the cytoplasm. The catalysed reaction is beta-D-fructose 6-phosphate + ATP = beta-D-fructose 1,6-bisphosphate + ADP + H(+). Its pathway is carbohydrate degradation; glycolysis; D-glyceraldehyde 3-phosphate and glycerone phosphate from D-glucose: step 3/4. Its activity is regulated as follows. Allosterically activated by ADP and other diphosphonucleosides, and allosterically inhibited by phosphoenolpyruvate. Functionally, catalyzes the phosphorylation of D-fructose 6-phosphate to fructose 1,6-bisphosphate by ATP, the first committing step of glycolysis. The protein is ATP-dependent 6-phosphofructokinase of Fusobacterium nucleatum subsp. nucleatum (strain ATCC 25586 / DSM 15643 / BCRC 10681 / CIP 101130 / JCM 8532 / KCTC 2640 / LMG 13131 / VPI 4355).